We begin with the raw amino-acid sequence, 62 residues long: Large ribosomal subunit protein bL33 (62 aa).

Belongs to the bacterial ribosomal protein bL33 family.

The sequence is that of Large ribosomal subunit protein bL33 from Cyanothece sp. (strain PCC 7425 / ATCC 29141).